Reading from the N-terminus, the 286-residue chain is Pantothenate synthetase (286 aa).

An ATP-binding site is contributed by 30-37 (MGNLHDGH). Residue H37 is the Proton donor of the active site. Q61 is a (R)-pantoate binding site. Q61 is a beta-alanine binding site. 149-152 (GEKD) serves as a coordination point for ATP. Q155 contributes to the (R)-pantoate binding site. Residues V178 and 186–189 (LSSR) each bind ATP.

This sequence belongs to the pantothenate synthetase family. Homodimer.

It is found in the cytoplasm. The catalysed reaction is (R)-pantoate + beta-alanine + ATP = (R)-pantothenate + AMP + diphosphate + H(+). The protein operates within cofactor biosynthesis; (R)-pantothenate biosynthesis; (R)-pantothenate from (R)-pantoate and beta-alanine: step 1/1. Functionally, catalyzes the condensation of pantoate with beta-alanine in an ATP-dependent reaction via a pantoyl-adenylate intermediate. The sequence is that of Pantothenate synthetase from Edwardsiella ictaluri (strain 93-146).